The primary structure comprises 323 residues: tRNA dimethylallyltransferase (323 aa).

Residue 13–20 participates in ATP binding; that stretch reads GPTASGKT. 15-20 serves as a coordination point for substrate; that stretch reads TASGKT. 4 interaction with substrate tRNA regions span residues 42 to 45, 166 to 170, 251 to 256, and 284 to 291; these read DSAL, QRIQR, RCVGYR, and KRQITWLR.

Belongs to the IPP transferase family. As to quaternary structure, monomer. Requires Mg(2+) as cofactor.

It catalyses the reaction adenosine(37) in tRNA + dimethylallyl diphosphate = N(6)-dimethylallyladenosine(37) in tRNA + diphosphate. Functionally, catalyzes the transfer of a dimethylallyl group onto the adenine at position 37 in tRNAs that read codons beginning with uridine, leading to the formation of N6-(dimethylallyl)adenosine (i(6)A). In Acidovorax sp. (strain JS42), this protein is tRNA dimethylallyltransferase.